A 288-amino-acid chain; its full sequence is Small ribosomal subunit protein uS3 (288 aa).

The region spanning 39-107 (VREYLKAKLK…PVAVNIEEVR (69 aa)) is the KH type-2 domain. Residues 209–288 (GRNDLPAAET…AAAAADGKGE (80 aa)) are disordered. Residues 219–238 (PRPEEERRPRGPRRDGRPGD) show a composition bias toward basic and acidic residues. Low complexity predominate over residues 277-288 (APAAAAADGKGE).

The protein belongs to the universal ribosomal protein uS3 family. Part of the 30S ribosomal subunit. Forms a tight complex with proteins S10 and S14.

Binds the lower part of the 30S subunit head. Binds mRNA in the 70S ribosome, positioning it for translation. The chain is Small ribosomal subunit protein uS3 from Acidovorax sp. (strain JS42).